We begin with the raw amino-acid sequence, 621 residues long: uncharacterized protein (621 aa).

2 disordered regions span residues 92 to 134 (FRNS…QINQ) and 268 to 310 (KINH…DDEI). The segment covering 94–134 (NSSNQSSQSNQVNQSNQSSPSSQISPSSQVNKFNQSSQINQ) has biased composition (low complexity). Residues 296–310 (TNDETNDETDNDDEI) are compositionally biased toward acidic residues. Positions 354 to 401 (ANKIQNKIIQIVETLNAYKNKQSQIAIEAKNKIKHITVSNKEVSENIE) form a coiled coil.

This is an uncharacterized protein from Acanthamoeba polyphaga mimivirus (APMV).